We begin with the raw amino-acid sequence, 83 residues long: MSGDKTIQFDPVENKKTLTKEILTKVYNSLLEKGYNPVNQLVGYLISGDPTYITNYNGARSLVIKLERDEILEEVIKSYLGIN.

It belongs to the UPF0297 family.

The sequence is that of UPF0297 protein CLK_1948 from Clostridium botulinum (strain Loch Maree / Type A3).